The primary structure comprises 672 residues: Glycerophosphocholine phosphodiesterase GPCPD1 (672 aa).

Residues 1–115 enclose the CBM20 domain; that stretch reads MTPSQVAFEI…IIIDDGQFGI (115 aa). Residues lysine 70 and 88–89 contribute to the substrate site; that span reads HK. Phosphoserine occurs at positions 175 and 424. A GP-PDE domain is found at 318 to 618; that stretch reads PLDVGHRGAG…DRIYDWMPEQ (301 aa). The residue at position 608 (tyrosine 608) is a Phosphotyrosine.

This sequence belongs to the glycerophosphoryl diester phosphodiesterase family. Widely expressed, with highest expression in spinal chord.

It localises to the cytoplasm. The protein resides in the cytosol. The catalysed reaction is sn-glycerol 3-phosphocholine + H2O = sn-glycerol 3-phosphate + choline + H(+). Functionally, may be involved in the negative regulation of skeletal muscle differentiation, independently of its glycerophosphocholine phosphodiesterase activity. This Homo sapiens (Human) protein is Glycerophosphocholine phosphodiesterase GPCPD1 (GPCPD1).